The sequence spans 145 residues: D-aminoacyl-tRNA deacylase (145 aa).

Positions 137–138 (GP) match the Gly-cisPro motif, important for rejection of L-amino acids motif.

It belongs to the DTD family. Homodimer.

It localises to the cytoplasm. The enzyme catalyses glycyl-tRNA(Ala) + H2O = tRNA(Ala) + glycine + H(+). It carries out the reaction a D-aminoacyl-tRNA + H2O = a tRNA + a D-alpha-amino acid + H(+). An aminoacyl-tRNA editing enzyme that deacylates mischarged D-aminoacyl-tRNAs. Also deacylates mischarged glycyl-tRNA(Ala), protecting cells against glycine mischarging by AlaRS. Acts via tRNA-based rather than protein-based catalysis; rejects L-amino acids rather than detecting D-amino acids in the active site. By recycling D-aminoacyl-tRNA to D-amino acids and free tRNA molecules, this enzyme counteracts the toxicity associated with the formation of D-aminoacyl-tRNA entities in vivo and helps enforce protein L-homochirality. This chain is D-aminoacyl-tRNA deacylase, found in Brevibacillus brevis (strain 47 / JCM 6285 / NBRC 100599).